A 481-amino-acid polypeptide reads, in one-letter code: 3-isopropylmalate dehydratase large subunit (481 aa).

Cys357, Cys417, and Cys420 together coordinate [4Fe-4S] cluster. The segment covering 429 to 441 has biased composition (polar residues); that stretch reads SPGQRCASTSNRN. Residues 429–451 form a disordered region; sequence SPGQRCASTSNRNFEGRQGKGGR.

This sequence belongs to the aconitase/IPM isomerase family. LeuC type 1 subfamily. As to quaternary structure, heterodimer of LeuC and LeuD. [4Fe-4S] cluster serves as cofactor.

It carries out the reaction (2R,3S)-3-isopropylmalate = (2S)-2-isopropylmalate. The protein operates within amino-acid biosynthesis; L-leucine biosynthesis; L-leucine from 3-methyl-2-oxobutanoate: step 2/4. Functionally, catalyzes the isomerization between 2-isopropylmalate and 3-isopropylmalate, via the formation of 2-isopropylmaleate. The sequence is that of 3-isopropylmalate dehydratase large subunit from Mycobacterium sp. (strain KMS).